We begin with the raw amino-acid sequence, 598 residues long: Probable transporter mch1 (598 aa).

Residues 1–49 are disordered; the sequence is MASPTPAPRPDQISASTPLLQSDSTSSCASSIRSLSPSRRRHRNGRTSP. Residues 22–37 show a composition bias toward low complexity; that stretch reads SDSTSSCASSIRSLSP. A glycan (N-linked (GlcNAc...) asparagine) is linked at Asn57. The next 6 membrane-spanning stretches (helical) occupy residues 63-83, 96-116, 122-142, 164-184, 202-222, and 241-261; these read ALLSSLCAGSITIFSMYGHIF, GLSSAASFATYMPVPLLGYMC, GPLSFVSALFFAAGYGLAAGV, LAYAAMITAFVFIGVGTCSMY, GLALAVPIAAFGLSGMWQSQL, and VFHFFIFLGVLLFVVGCLGTF. The disordered stretch occupies residues 315–334; the sequence is AGILDPSKPDNDSDSEEEDD. The N-linked (GlcNAc...) asparagine glycan is linked to Asn325. 6 consecutive transmembrane segments (helical) span residues 355 to 375, 405 to 425, 453 to 473, 486 to 506, 516 to 536, and 565 to 585; these read HTMWCFALGFFLMIGPGEAFI, IVGITSTLVRLLTGSLTDLLA, FLLFFAVTLSVGLATLASGWI, LVGAGYGAVFSLTPIIITVIW, GIVAMFPALGATFWGLVYSAV, and SAFWAMAASVWVACGLVLWAW.

It belongs to the major facilitator superfamily.

It is found in the vacuole membrane. Probable transporter. This Neurospora crassa (strain ATCC 24698 / 74-OR23-1A / CBS 708.71 / DSM 1257 / FGSC 987) protein is Probable transporter mch1 (mch1).